The primary structure comprises 1419 residues: Collagen alpha-1(II) chain (1419 aa).

The signal sequence occupies residues 1–25 (MIRLGAPQSLVLLTLLIATVLQCQG). Residues 26-113 (QDARKLGPKG…PGLGGGNFAA (88 aa)) constitute a propeptide, N-terminal propeptide. The tract at residues 28-1168 (ARKLGPKGQK…GQREKGPDPL (1141 aa)) is disordered. Composition is skewed to basic and acidic residues over residues 36–47 (QKGEPGDIKDII) and 64–85 (PRGDRGDKGERGAPGPRGRDGE). Positions 89 to 104 (PGNPGPPGPPGPPGPP) are enriched in pro residues. K122 carries the 5-hydroxylysine modification. O-linked (Gal...) hydroxylysine glycosylation is present at K122. Positions 124–135 (GGAQMGVMQGPM) are enriched in low complexity. The segment at 133-1146 (GPMGPMGPRG…PGPPGPPGPP (1014 aa)) is triple-helical region. The span at 140 to 149 (PRGPPGPAGA) shows a compositional bias: pro residues. Low complexity predominate over residues 150 to 171 (PGPQGFQGNPGEPGEPGVSGPI). The span at 183 to 197 (PGDDGEAGKPGKAGE) shows a compositional bias: basic and acidic residues. 5-hydroxylysine occurs at positions 219, 231, and 240. Residues K219, K231, and K240 are each glycosylated (O-linked (Gal...) hydroxylysine). 2 stretches are compositionally biased toward low complexity: residues 242–252 (ESGSPGENGSP) and 267–282 (TGPAGAAGARGNDGQP). The segment covering 292-301 (GPAGGPGFLG) has biased composition (gly residues). Position 306 is a 5-hydroxylysine (K306). K306 carries O-linked (Gal...) hydroxylysine glycosylation. The segment covering 335-363 (PAGASGNPGTDGIPGAKGSAGAPGIAGAP) has biased composition (low complexity). The span at 365 to 374 (FPGPRGPPGP) shows a compositional bias: pro residues. Over residues 404-417 (ETGPAGPQGAPGPA) the composition is skewed to low complexity. K540 and K552 each carry 5-hydroxylysine. O-linked (Gal...) hydroxylysine glycans are attached at residues K540 and K552. A compositionally biased stretch (low complexity) spans 554–563 (LAGAPGLRGL). Residues P591 and P600 each carry the 4-hydroxyproline modification. At P602 the chain carries 3-hydroxyproline; partial. P603 and P606 each carry 4-hydroxyproline. The segment covering 638–668 (ERGSPGAQGLQGPRGLPGTPGTDGPKGAAGP) has biased composition (low complexity). A compositionally biased stretch (basic and acidic residues) spans 696 to 707 (KGDRGDVGEKGP). Composition is skewed to low complexity over residues 765–780 (AGFAGPPGADGQPGAK) and 809–846 (PTGVTGPKGARGAQGPPGATGFPGAAGRVGPPGSNGNP). P839 carries the post-translational modification 3-hydroxyproline; partial. 4-hydroxyproline is present on residues P840, P846, and P852. The span at 1001 to 1011 (APGPPGSPGPA) shows a compositional bias: pro residues. Residues 1047–1061 (RGDKGEAGEPGERGL) are compositionally biased toward basic and acidic residues. P1076 carries the post-translational modification 3-hydroxyproline; partial. Composition is skewed to low complexity over residues 1080–1089 (SGDQGTSGPA) and 1103–1113 (PSGKDGSNGIP). Position 1113 is a 4-hydroxyproline (P1113). 3-hydroxyproline is present on P1118. At P1119 the chain carries 4-hydroxyproline. Positions 1131-1148 (AGPPGNPGPPGPPGPPGP) are enriched in pro residues. P1133 carries the post-translational modification 3-hydroxyproline; partial. 4-hydroxyproline occurs at positions 1134 and 1137. P1139 is modified (3-hydroxyproline; partial). 2 positions are modified to 4-hydroxyproline: P1140 and P1143. 3-hydroxyproline; partial is present on P1145. P1146 is subject to 4-hydroxyproline. A nonhelical region (C-terminal) region spans residues 1147-1173 (GPGIDMSAFAGLGQREKGPDPLQYMRA). In terms of domain architecture, Fibrillar collagen NC1 spans 1185–1419 (VEVDATLKSL…GVDIGPVCFL (235 aa)). 3 disulfides stabilise this stretch: C1215/C1247, C1255/C1417, and C1325/C1370. Ca(2+) contacts are provided by D1233, N1235, Q1236, C1238, and D1241. N1320 is a glycosylation site (N-linked (GlcNAc...) asparagine).

It belongs to the fibrillar collagen family. In terms of assembly, homotrimers of alpha 1(II) chains. Contains mostly 4-hydroxyproline. Prolines at the third position of the tripeptide repeating unit (G-X-P) are 4-hydroxylated in some or all of the chains. In terms of processing, contains 3-hydroxyproline at a few sites. This modification occurs on the first proline residue in the sequence motif Gly-Pro-Hyp, where Hyp is 4-hydroxyproline. Post-translationally, lysine residues at the third position of the tripeptide repeating unit (G-X-Y) are 5-hydroxylated in some or all of the chains. O-glycosylated on hydroxylated lysine residues. The O-linked glycan consists of a Glc-Gal disaccharide. In terms of tissue distribution, expressed in chondrocytes.

The protein localises to the secreted. It is found in the extracellular space. It localises to the extracellular matrix. In terms of biological role, type II collagen is specific for cartilaginous tissues. It is essential for the normal embryonic development of the skeleton, for linear growth and for the ability of cartilage to resist compressive forces. This Rattus norvegicus (Rat) protein is Collagen alpha-1(II) chain.